We begin with the raw amino-acid sequence, 406 residues long: Exodeoxyribonuclease 7 large subunit (406 aa).

It belongs to the XseA family. In terms of assembly, heterooligomer composed of large and small subunits.

The protein localises to the cytoplasm. The enzyme catalyses Exonucleolytic cleavage in either 5'- to 3'- or 3'- to 5'-direction to yield nucleoside 5'-phosphates.. Functionally, bidirectionally degrades single-stranded DNA into large acid-insoluble oligonucleotides, which are then degraded further into small acid-soluble oligonucleotides. This is Exodeoxyribonuclease 7 large subunit from Desulfitobacterium hafniense (strain Y51).